We begin with the raw amino-acid sequence, 264 residues long: Thymidylate synthase (264 aa).

Arginine 21 provides a ligand contact to dUMP. Residue histidine 51 participates in (6R)-5,10-methylene-5,6,7,8-tetrahydrofolate binding. Residue 126-127 participates in dUMP binding; sequence RR. Cysteine 146 serves as the catalytic Nucleophile. Residues 166–169, asparagine 177, and 207–209 contribute to the dUMP site; these read RSAD and HIY. (6R)-5,10-methylene-5,6,7,8-tetrahydrofolate is bound at residue aspartate 169. A (6R)-5,10-methylene-5,6,7,8-tetrahydrofolate-binding site is contributed by alanine 263.

This sequence belongs to the thymidylate synthase family. Bacterial-type ThyA subfamily. Homodimer.

The protein localises to the cytoplasm. It carries out the reaction dUMP + (6R)-5,10-methylene-5,6,7,8-tetrahydrofolate = 7,8-dihydrofolate + dTMP. Its pathway is pyrimidine metabolism; dTTP biosynthesis. Catalyzes the reductive methylation of 2'-deoxyuridine-5'-monophosphate (dUMP) to 2'-deoxythymidine-5'-monophosphate (dTMP) while utilizing 5,10-methylenetetrahydrofolate (mTHF) as the methyl donor and reductant in the reaction, yielding dihydrofolate (DHF) as a by-product. This enzymatic reaction provides an intracellular de novo source of dTMP, an essential precursor for DNA biosynthesis. The sequence is that of Thymidylate synthase from Brucella ovis (strain ATCC 25840 / 63/290 / NCTC 10512).